We begin with the raw amino-acid sequence, 396 residues long: Transcription factor E2FC (396 aa).

The span at 34-48 (PRYSSLTPSSTNRPF) shows a compositional bias: polar residues. A disordered region spans residues 34–57 (PRYSSLTPSSTNRPFSVSQSLPNS). The DNA-binding element occupies 155–220 (RYDSSLGLLT…TTKNHIRWKG (66 aa)). A coiled-coil region spans residues 226–268 (QKDLGDQISRLKSEVESMQSEESRLDDLIRERQEALRSLEEDD). The interval 236–264 (LKSEVESMQSEESRLDDLIRERQEALRSL) is leucine-zipper. The retinoblastoma protein binding stretch occupies residues 376-391 (DYWFESDAEVSLTDLW).

It belongs to the E2F/DP family. As to quaternary structure, heterodimer with DP proteins. Interacts preferentially with DPB, but also with DPA. No interaction with DPB when phosphorylated. Interacts with SKP2A, CDKA-1 and maize retinoblastoma-related protein RBR1. Component of a DREAM-like complex which modulates a variety of developmentally regulated genes and of the mitotic genes in proliferating and differentiated cells. Interacts with MYB3R3 at later stages of leaves development. Post-translationally, phosphorylated by cyclin-dependent kinase. Phosphorylation is necessary to target E2FC for proteolysis. In terms of tissue distribution, expressed in meristematic areas, vascular tissues, apical part of the roots, cotyledons, upper region of the hypocotyls, trichomes, young flower buds and pollen grains.

It is found in the cytoplasm. Functionally, involved in transcriptional repression. May act by repressing E2F-regulated genes in mature differentiated cells, but is not an antagonist of E2FA. Restricts cell division and is involved in the coordination between cell proliferation and endoreduplication during development. May play a role during the transition from skotomorphogenesis to photomorphogenesis. Regulated by phosphorylation-dependent proteolysis via the protein-ubiquitin ligase SCF(SKP2A) complex. The sequence is that of Transcription factor E2FC (E2FC) from Arabidopsis thaliana (Mouse-ear cress).